A 322-amino-acid chain; its full sequence is Methionyl-tRNA formyltransferase (322 aa).

112 to 115 (SLLP) provides a ligand contact to (6S)-5,6,7,8-tetrahydrofolate.

Belongs to the Fmt family.

The catalysed reaction is L-methionyl-tRNA(fMet) + (6R)-10-formyltetrahydrofolate = N-formyl-L-methionyl-tRNA(fMet) + (6S)-5,6,7,8-tetrahydrofolate + H(+). In terms of biological role, attaches a formyl group to the free amino group of methionyl-tRNA(fMet). The formyl group appears to play a dual role in the initiator identity of N-formylmethionyl-tRNA by promoting its recognition by IF2 and preventing the misappropriation of this tRNA by the elongation apparatus. The polypeptide is Methionyl-tRNA formyltransferase (Synechococcus sp. (strain JA-3-3Ab) (Cyanobacteria bacterium Yellowstone A-Prime)).